Consider the following 143-residue polypeptide: Hemoglobin anodic subunit alpha (143 aa).

Ser-2 carries the N-acetylserine modification. The 142-residue stretch at 2–143 (SLSAKDMAVV…FTLALSERYR (142 aa)) folds into the Globin domain. His-60 serves as a coordination point for O2. His-89 is a heme b binding site.

It belongs to the globin family. Heterotetramer of two alpha chains and two beta chains. As to expression, red blood cells.

Its function is as follows. Involved in oxygen transport from gills to the various peripheral tissues. The polypeptide is Hemoglobin anodic subunit alpha (hba) (Anguilla anguilla (European freshwater eel)).